Reading from the N-terminus, the 143-residue chain is uncharacterized protein (143 aa).

The N-terminal stretch at M1–A32 is a signal peptide.

It to M.tuberculosis Rv1269c.

This is an uncharacterized protein from Mycobacterium tuberculosis (strain CDC 1551 / Oshkosh).